The following is a 207-amino-acid chain: Large ribosomal subunit protein uL4 (207 aa).

The segment at His49–Ile78 is disordered.

The protein belongs to the universal ribosomal protein uL4 family. Part of the 50S ribosomal subunit.

Its function is as follows. One of the primary rRNA binding proteins, this protein initially binds near the 5'-end of the 23S rRNA. It is important during the early stages of 50S assembly. It makes multiple contacts with different domains of the 23S rRNA in the assembled 50S subunit and ribosome. Functionally, forms part of the polypeptide exit tunnel. This Streptococcus uberis (strain ATCC BAA-854 / 0140J) protein is Large ribosomal subunit protein uL4.